Here is a 378-residue protein sequence, read N- to C-terminus: E3 ubiquitin-protein ligase ATL9 (378 aa).

The N-terminal stretch at 1–33 (MAILDTKSSRWIPHNLLFLLLLLLLQSVPYGFG) is a signal peptide. Residues 51–71 (VVVVITVLFLVIFFMVFGSIF) traverse the membrane as a helical segment. The segment at 135 to 177 (CAVCLCEFEDDETLRLMPPCCHVFHADCVDVWLSEHSTCPLCR) adopts an RING-type; atypical zinc-finger fold. 3 disordered regions span residues 187–211 (DDDD…DPER), 300–326 (ARSS…RKSN), and 350–378 (FSGD…DERV). The segment covering 193-207 (ESYSGTDPGTISSST) has biased composition (polar residues). Positions 301-317 (RSSRSGYRSGSVGSERS) are enriched in low complexity. Basic and acidic residues predominate over residues 364-378 (AGERSFERLRPDERV).

This sequence belongs to the RING-type zinc finger family. ATL subfamily.

The protein localises to the membrane. It carries out the reaction S-ubiquitinyl-[E2 ubiquitin-conjugating enzyme]-L-cysteine + [acceptor protein]-L-lysine = [E2 ubiquitin-conjugating enzyme]-L-cysteine + N(6)-ubiquitinyl-[acceptor protein]-L-lysine.. Its pathway is protein modification; protein ubiquitination. Functionally, E3 ubiquitin-protein ligase able to catalyze polyubiquitination with ubiquitin-conjugating enzyme E2 UBC8 in vitro. May be involved in the early steps of the plant defense signaling pathway. The chain is E3 ubiquitin-protein ligase ATL9 (ATL9) from Arabidopsis thaliana (Mouse-ear cress).